We begin with the raw amino-acid sequence, 327 residues long: Spermidine/putrescine import ATP-binding protein PotA (327 aa).

Residues 5–235 (IKVEAVEKHF…PKTLFVATFI (231 aa)) form the ABC transporter domain. An ATP-binding site is contributed by 37–44 (GPSGCGKT).

This sequence belongs to the ABC transporter superfamily. Spermidine/putrescine importer (TC 3.A.1.11.1) family. The complex is composed of two ATP-binding proteins (PotA), two transmembrane proteins (PotB and PotC) and a solute-binding protein (PotD).

It is found in the cell membrane. The catalysed reaction is ATP + H2O + polyamine-[polyamine-binding protein]Side 1 = ADP + phosphate + polyamineSide 2 + [polyamine-binding protein]Side 1.. In terms of biological role, part of the ABC transporter complex PotABCD involved in spermidine/putrescine import. Responsible for energy coupling to the transport system. The protein is Spermidine/putrescine import ATP-binding protein PotA of Bacillus cereus (strain ATCC 14579 / DSM 31 / CCUG 7414 / JCM 2152 / NBRC 15305 / NCIMB 9373 / NCTC 2599 / NRRL B-3711).